The following is a 75-amino-acid chain: Dermaseptin-DA2 (75 aa).

Positions 1-22 (MALVKKSLFLVLFLGLVSLSIC) are cleaved as a signal peptide. Residues 23–42 (EEKRENEDEEEQEDDEQSEE) constitute a propeptide that is removed on maturation.

This sequence belongs to the frog skin active peptide (FSAP) family. Dermaseptin subfamily. Expressed by the skin glands.

The protein resides in the secreted. Its function is as follows. Possesses a potent antimicrobial activity against Gram-positive and Gram-negative bacteria. Probably acts by disturbing membrane functions with its amphipathic structure. The polypeptide is Dermaseptin-DA2 (Agalychnis dacnicolor (Giant Mexican leaf frog)).